Reading from the N-terminus, the 156-residue chain is SsrA-binding protein (156 aa).

The protein belongs to the SmpB family.

The protein resides in the cytoplasm. Functionally, required for rescue of stalled ribosomes mediated by trans-translation. Binds to transfer-messenger RNA (tmRNA), required for stable association of tmRNA with ribosomes. tmRNA and SmpB together mimic tRNA shape, replacing the anticodon stem-loop with SmpB. tmRNA is encoded by the ssrA gene; the 2 termini fold to resemble tRNA(Ala) and it encodes a 'tag peptide', a short internal open reading frame. During trans-translation Ala-aminoacylated tmRNA acts like a tRNA, entering the A-site of stalled ribosomes, displacing the stalled mRNA. The ribosome then switches to translate the ORF on the tmRNA; the nascent peptide is terminated with the 'tag peptide' encoded by the tmRNA and targeted for degradation. The ribosome is freed to recommence translation, which seems to be the essential function of trans-translation. The polypeptide is SsrA-binding protein (Clostridium perfringens (strain 13 / Type A)).